A 284-amino-acid chain; its full sequence is RNase adapter protein RapZ (284 aa).

Residue 8–15 participates in ATP binding; that stretch reads GRSGSGKS. 56-59 contacts GTP; sequence DVRN. The interval 266-284 is RNA-binding; sequence RSRGKNVQSRHRTLEKRKP.

The protein belongs to the RapZ-like family. RapZ subfamily. Homotrimer.

Its function is as follows. Modulates the synthesis of GlmS, by affecting the processing and stability of the regulatory small RNA GlmZ. When glucosamine-6-phosphate (GlcN6P) concentrations are high in the cell, RapZ binds GlmZ and targets it to cleavage by RNase E. Consequently, GlmZ is inactivated and unable to activate GlmS synthesis. Under low GlcN6P concentrations, RapZ is sequestered and inactivated by an other regulatory small RNA, GlmY, preventing GlmZ degradation and leading to synthesis of GlmS. The polypeptide is RNase adapter protein RapZ (Shigella dysenteriae serotype 1 (strain Sd197)).